The chain runs to 474 residues: ATP synthase subunit beta (474 aa).

152–159 (GGAGVGKT) is an ATP binding site.

The protein belongs to the ATPase alpha/beta chains family. F-type ATPases have 2 components, CF(1) - the catalytic core - and CF(0) - the membrane proton channel. CF(1) has five subunits: alpha(3), beta(3), gamma(1), delta(1), epsilon(1). CF(0) has three main subunits: a(1), b(2) and c(9-12). The alpha and beta chains form an alternating ring which encloses part of the gamma chain. CF(1) is attached to CF(0) by a central stalk formed by the gamma and epsilon chains, while a peripheral stalk is formed by the delta and b chains.

It is found in the cell inner membrane. It catalyses the reaction ATP + H2O + 4 H(+)(in) = ADP + phosphate + 5 H(+)(out). In terms of biological role, produces ATP from ADP in the presence of a proton gradient across the membrane. The catalytic sites are hosted primarily by the beta subunits. The protein is ATP synthase subunit beta of Magnetococcus marinus (strain ATCC BAA-1437 / JCM 17883 / MC-1).